Consider the following 153-residue polypeptide: Histone H2B.6 (153 aa).

Basic and acidic residues-rich tracts occupy residues 1–28 and 36–53; these read MAPK…EKAP and EKRL…EGKK. The segment at 1–60 is disordered; that stretch reads MAPKAEKKPAAKKPAEEEPAAEKAEKAPAGKKPKAEKRLPAGKGEKGSGEGKKAGRKKGK. An N6-acetyllysine mark is found at K7 and K37. A Glycyl lysine isopeptide (Lys-Gly) (interchain with G-Cter in ubiquitin) cross-link involves residue K149.

Belongs to the histone H2B family. In terms of assembly, the nucleosome is a histone octamer containing two molecules each of H2A, H2B, H3 and H4 assembled in one H3-H4 heterotetramer and two H2A-H2B heterodimers. The octamer wraps approximately 147 bp of DNA. Can be acetylated to form H2BK6ac and H2BK33ac. Post-translationally, monoubiquitinated by BRE1 to form H2BK143ub1 and deubiquitinated by UBP26. Required for heterochromatic histone H3 di- and trimethylation at H3K4me. May give a specific tag for epigenetic transcriptional activation.

It localises to the nucleus. The protein localises to the chromosome. In terms of biological role, core component of nucleosome. Nucleosomes wrap and compact DNA into chromatin, limiting DNA accessibility to the cellular machineries which require DNA as a template. Histones thereby play a central role in transcription regulation, DNA repair, DNA replication and chromosomal stability. DNA accessibility is regulated via a complex set of post-translational modifications of histones, also called histone code, and nucleosome remodeling. In Oryza sativa subsp. indica (Rice), this protein is Histone H2B.6 (H2B.6).